The primary structure comprises 479 residues: Glycogen synthase (479 aa).

Residue Lys15 coordinates ADP-alpha-D-glucose.

This sequence belongs to the glycosyltransferase 1 family. Bacterial/plant glycogen synthase subfamily.

The enzyme catalyses [(1-&gt;4)-alpha-D-glucosyl](n) + ADP-alpha-D-glucose = [(1-&gt;4)-alpha-D-glucosyl](n+1) + ADP + H(+). It functions in the pathway glycan biosynthesis; glycogen biosynthesis. Its function is as follows. Synthesizes alpha-1,4-glucan chains using ADP-glucose. The polypeptide is Glycogen synthase (Roseobacter denitrificans (strain ATCC 33942 / OCh 114) (Erythrobacter sp. (strain OCh 114))).